Reading from the N-terminus, the 242-residue chain is Pyridoxine 5'-phosphate synthase (242 aa).

Position 6 (Asn6) interacts with 3-amino-2-oxopropyl phosphate. 8-9 (DH) contributes to the 1-deoxy-D-xylulose 5-phosphate binding site. Arg17 is a 3-amino-2-oxopropyl phosphate binding site. Catalysis depends on His42, which acts as the Proton acceptor. Residues Arg44 and His49 each coordinate 1-deoxy-D-xylulose 5-phosphate. Glu69 acts as the Proton acceptor in catalysis. Thr99 is a 1-deoxy-D-xylulose 5-phosphate binding site. Residue His193 is the Proton donor of the active site. 3-amino-2-oxopropyl phosphate contacts are provided by residues Gly194 and 217-218 (GH).

The protein belongs to the PNP synthase family. As to quaternary structure, homooctamer; tetramer of dimers.

It localises to the cytoplasm. It catalyses the reaction 3-amino-2-oxopropyl phosphate + 1-deoxy-D-xylulose 5-phosphate = pyridoxine 5'-phosphate + phosphate + 2 H2O + H(+). It functions in the pathway cofactor biosynthesis; pyridoxine 5'-phosphate biosynthesis; pyridoxine 5'-phosphate from D-erythrose 4-phosphate: step 5/5. Catalyzes the complicated ring closure reaction between the two acyclic compounds 1-deoxy-D-xylulose-5-phosphate (DXP) and 3-amino-2-oxopropyl phosphate (1-amino-acetone-3-phosphate or AAP) to form pyridoxine 5'-phosphate (PNP) and inorganic phosphate. This is Pyridoxine 5'-phosphate synthase from Aquifex aeolicus (strain VF5).